The primary structure comprises 254 residues: Claudin-16 (254 aa).

Topologically, residues 1-22 (MGPGLAASHVSFPDSLLAKMRD) are cytoplasmic. Residues 23–43 (LLQYVACFFAFFSAGFLVVAT) traverse the membrane as a helical segment. At 44 to 98 (WTDCWMVNADDSLEVSTKCRGLWWECVTNAFDGIRTCDEYDSILAEHSLKLVVTR) the chain is on the extracellular side. The helical transmembrane segment at 99–119 (ALMITADILAGFGFITLLLGL) threads the bilayer. Topologically, residues 120–134 (DCVKFLPDEPYIKVR) are cytoplasmic. Residues 135–155 (ISFVAGTTLLIAGAPGIIGSV) form a helical membrane-spanning segment. The Extracellular portion of the chain corresponds to 156 to 188 (WYAVDVYVERSSLVLHNIFLGIQYKFGWSCWLG). Residues 189-209 (MAGSLGCFLAGAILTCCLYLF) traverse the membrane as a helical segment. Over 210-254 (KDVGPERSYPYSTRKAYSTTAVSMPRSHAIPRTQTAKMYAVDTRV) the chain is Cytoplasmic. Residues 252-254 (TRV) carry the Interaction with TJP1 motif.

Belongs to the claudin family. Can form heteropolymeric tight junction strands with other claudins. Interacts with CLDN19. Interacts (via PDZ-binding motif TRV) with TJP1 (via PDZ domain). Cannot form tight junction strands on its own. In terms of tissue distribution, expressed preferentially in kidney.

The protein localises to the cell junction. Its subcellular location is the tight junction. It localises to the cell membrane. The enzyme catalyses Mg(2+)(in) = Mg(2+)(out). It catalyses the reaction Ca(2+)(in) = Ca(2+)(out). It carries out the reaction Na(+)(in) = Na(+)(out). The catalysed reaction is K(+)(in) = K(+)(out). The enzyme catalyses Rb(+)(in) = Rb(+)(out). It catalyses the reaction Cs(+)(in) = Cs(+)(out). It carries out the reaction Li(+)(in) = Li(+)(out). Its function is as follows. Forms paracellular channels: coassembles with CLDN19 into tight junction strands with cation-selective channels through the strands, conveying epithelial permeability in a process known as paracellular tight junction permeability. Involved in the maintenance of ion gradients along the nephron. In the thick ascending limb (TAL) of Henle's loop, facilitates sodium paracellular permeability from the interstitial compartment to the lumen, contributing to the lumen-positive transepithelial potential that drives paracellular magnesium and calcium reabsorption. The protein is Claudin-16 (CLDN16) of Bos taurus (Bovine).